A 387-amino-acid chain; its full sequence is Large ribosomal subunit protein uL3 (387 aa).

Serine 24 is modified (phosphoserine). Lysine 39 participates in a covalent cross-link: Glycyl lysine isopeptide (Lys-Gly) (interchain with G-Cter in ubiquitin). Threonine 103 carries the post-translational modification Phosphothreonine. Lysine 136 participates in a covalent cross-link: Glycyl lysine isopeptide (Lys-Gly) (interchain with G-Cter in ubiquitin). The residue at position 156 (serine 156) is a Phosphoserine. Residue histidine 243 is modified to Pros-methylhistidine. Serine 297 is subject to Phosphoserine.

This sequence belongs to the universal ribosomal protein uL3 family. Component of the large ribosomal subunit (LSU). Mature yeast ribosomes consist of a small (40S) and a large (60S) subunit. The 40S small subunit contains 1 molecule of ribosomal RNA (18S rRNA) and 33 different proteins (encoded by 57 genes). The large 60S subunit contains 3 rRNA molecules (25S, 5.8S and 5S rRNA) and 46 different proteins (encoded by 81 genes). uL3 forms together with ES39L one of the contact sites for the signal recognition particle that targets ribosomes to the endoplasmic reticulum membrane. Methylation at His-243 by HPM1 is required for proper 60S subunit assembly and promotes translational elongation fidelity.

It is found in the cytoplasm. Functionally, component of the ribosome, a large ribonucleoprotein complex responsible for the synthesis of proteins in the cell. The small ribosomal subunit (SSU) binds messenger RNAs (mRNAs) and translates the encoded message by selecting cognate aminoacyl-transfer RNA (tRNA) molecules. The large subunit (LSU) contains the ribosomal catalytic site termed the peptidyl transferase center (PTC), which catalyzes the formation of peptide bonds, thereby polymerizing the amino acids delivered by tRNAs into a polypeptide chain. The nascent polypeptides leave the ribosome through a tunnel in the LSU and interact with protein factors that function in enzymatic processing, targeting, and the membrane insertion of nascent chains at the exit of the ribosomal tunnel. uL3 plays a role in coordinating processes of accommodating the aminoacyl-tRNA in the PTC. The chain is Large ribosomal subunit protein uL3 from Saccharomyces cerevisiae (strain ATCC 204508 / S288c) (Baker's yeast).